The chain runs to 318 residues: tRNA U34 carboxymethyltransferase (318 aa).

Carboxy-S-adenosyl-L-methionine contacts are provided by K88, W102, K107, G126, M192, Y196, and R311.

It belongs to the class I-like SAM-binding methyltransferase superfamily. CmoB family. In terms of assembly, homotetramer.

It catalyses the reaction carboxy-S-adenosyl-L-methionine + 5-hydroxyuridine(34) in tRNA = 5-carboxymethoxyuridine(34) in tRNA + S-adenosyl-L-homocysteine + H(+). Catalyzes carboxymethyl transfer from carboxy-S-adenosyl-L-methionine (Cx-SAM) to 5-hydroxyuridine (ho5U) to form 5-carboxymethoxyuridine (cmo5U) at position 34 in tRNAs. This chain is tRNA U34 carboxymethyltransferase, found in Pseudomonas fluorescens (strain Pf0-1).